Consider the following 315-residue polypeptide: Olfactory receptor 3A2 (315 aa).

At 1–29 the chain is on the extracellular side; sequence MEPEAGTNRTAVAEFILLGLVQTEEMQPV. Residue asparagine 8 is glycosylated (N-linked (GlcNAc...) asparagine). Residues 30–52 traverse the membrane as a helical segment; it reads VFVLFLFAYLVTIGGNLSILAAI. The Cytoplasmic portion of the chain corresponds to 53–60; it reads LVEPKLHA. Residues 61 to 82 traverse the membrane as a helical segment; sequence PMYFFLGNLSVLDVGCITVTVP. Residues 83-103 are Extracellular-facing; sequence AMLGRLLSHKSTISYDACLSQ. Cysteine 100 and cysteine 192 are joined by a disulfide. Residues 104–123 form a helical membrane-spanning segment; sequence LFFFHLLAGMDCFLLTAMAY. The Cytoplasmic portion of the chain corresponds to 124–143; it reads DRFLAICWPLTYSTRMSQTV. Residues 144-161 traverse the membrane as a helical segment; the sequence is QRMLVAASWACAFTNALT. Residues 162 to 199 lie on the Extracellular side of the membrane; sequence HTVAMSTLNFCGPNEVNHFYCDLPQLFQLSCSSTQLNE. Residues 200–223 traverse the membrane as a helical segment; the sequence is LLLFAVGFIMAGTPLVLIITSYSH. Residues 224–240 are Cytoplasmic-facing; the sequence is VAAAVLRIRSVEGWKKA. The helical transmembrane segment at 241-264 threads the bilayer; sequence FSTCGSHLTVVCLFFGTGIFNYMR. The Extracellular portion of the chain corresponds to 265–275; it reads LGSEEASDKDK. Residues 276–295 traverse the membrane as a helical segment; that stretch reads GVGVFNTVINPMLNPLIYSL. Residues 296 to 315 lie on the Cytoplasmic side of the membrane; the sequence is RNPDVQGALWRIFLGRRSLT.

The protein belongs to the G-protein coupled receptor 1 family.

It is found in the cell membrane. Functionally, odorant receptor. The polypeptide is Olfactory receptor 3A2 (OR3A2) (Pan troglodytes (Chimpanzee)).